Consider the following 128-residue polypeptide: Claw keratin (128 aa).

A run of 2 repeats spans residues 83 to 91 and 92 to 100. Residues 83-104 form a 3 X 9 AA tandem repeats, Gly-rich region; that stretch reads GGYGGLGGYGGYGGLGGYGGYG. The stretch at 101 to 109 is one 3; approximate repeat; the sequence is GGYGGFGSC.

This sequence belongs to the avian keratin family. In terms of tissue distribution, abundantly expressed in the claw and at a low level in feather tissue.

The sequence is that of Claw keratin (CKER1) from Gallus gallus (Chicken).